A 195-amino-acid polypeptide reads, in one-letter code: Imidazoleglycerol-phosphate dehydratase (195 aa).

It belongs to the imidazoleglycerol-phosphate dehydratase family.

It is found in the cytoplasm. The catalysed reaction is D-erythro-1-(imidazol-4-yl)glycerol 3-phosphate = 3-(imidazol-4-yl)-2-oxopropyl phosphate + H2O. It functions in the pathway amino-acid biosynthesis; L-histidine biosynthesis; L-histidine from 5-phospho-alpha-D-ribose 1-diphosphate: step 6/9. In Maridesulfovibrio salexigens (strain ATCC 14822 / DSM 2638 / NCIMB 8403 / VKM B-1763) (Desulfovibrio salexigens), this protein is Imidazoleglycerol-phosphate dehydratase.